Consider the following 212-residue polypeptide: ATP-dependent Clp protease proteolytic subunit (212 aa).

Ser-106 acts as the Nucleophile in catalysis. The active site involves His-131.

The protein belongs to the peptidase S14 family. In terms of assembly, fourteen ClpP subunits assemble into 2 heptameric rings which stack back to back to give a disk-like structure with a central cavity, resembling the structure of eukaryotic proteasomes.

The protein resides in the cytoplasm. It carries out the reaction Hydrolysis of proteins to small peptides in the presence of ATP and magnesium. alpha-casein is the usual test substrate. In the absence of ATP, only oligopeptides shorter than five residues are hydrolyzed (such as succinyl-Leu-Tyr-|-NHMec, and Leu-Tyr-Leu-|-Tyr-Trp, in which cleavage of the -Tyr-|-Leu- and -Tyr-|-Trp bonds also occurs).. Cleaves peptides in various proteins in a process that requires ATP hydrolysis. Has a chymotrypsin-like activity. Plays a major role in the degradation of misfolded proteins. This chain is ATP-dependent Clp protease proteolytic subunit, found in Rhodopseudomonas palustris (strain ATCC BAA-98 / CGA009).